A 296-amino-acid chain; its full sequence is MHPRFENAFRQLPASLQAALRPLIDKPDFAAMLTADDVNAVCEASQLDADALAFALLPLAAACAQAPISNFQVGAIAQGLSGNFYFGANMEFSAVQLQQTVHAEQSAVSHAWMRNERGLRAVTVNYTPCGHCRQFMNELRDAASLRIQLPGRQPATLSHYLPDSFGPVDLQIDTLLMDDINHGATLQNMNALARQALDAANRSHAPYSKAISGIVLETSSGNTYTGRYAENAAFNPSLPPLQTALNLMNLAGEDLSTVKHAVVVERRNAVVSHWAISQIMLAELGCTDVEHHFIEE.

CMP/dCMP-type deaminase domains follow at residues 48-168 and 187-296; these read DADA…FGPV and QNMN…FIEE. 89–91 contacts substrate; the sequence is NME. H102 provides a ligand contact to Zn(2+). E104 functions as the Proton donor in the catalytic mechanism. C129 and C132 together coordinate Zn(2+).

Belongs to the cytidine and deoxycytidylate deaminase family. In terms of assembly, homodimer. The cofactor is Zn(2+).

The catalysed reaction is cytidine + H2O + H(+) = uridine + NH4(+). It carries out the reaction 2'-deoxycytidine + H2O + H(+) = 2'-deoxyuridine + NH4(+). In terms of biological role, this enzyme scavenges exogenous and endogenous cytidine and 2'-deoxycytidine for UMP synthesis. This is Cytidine deaminase from Pectobacterium carotovorum subsp. carotovorum (strain PC1).